The following is a 396-amino-acid chain: Cytochrome b (396 aa).

The next 4 membrane-spanning stretches (helical) occupy residues 37 to 57, 81 to 102, 117 to 137, and 182 to 202; these read FGSL…ILAM, WLMR…YAHI, WNVG…GYVL, and FFTF…IHIM. Positions 87 and 101 each coordinate heme b. Heme b-binding residues include H186 and H200. A ubiquinone is bound at residue H205. 4 helical membrane-spanning segments follow: residues 230-250, 292-312, 324-344, and 351-371; these read FKDI…SLLA, LGGV…PFTH, LAQI…WLGG, and FILM…LVFP.

It belongs to the cytochrome b family. As to quaternary structure, the cytochrome bc1 complex contains 3 respiratory subunits (MT-CYB, CYC1 and UQCRFS1), 2 core proteins (UQCRC1 and UQCRC2) and probably 6 low-molecular weight proteins. The cofactor is heme b.

It is found in the mitochondrion inner membrane. Component of the ubiquinol-cytochrome c reductase complex (complex III or cytochrome b-c1 complex) that is part of the mitochondrial respiratory chain. The b-c1 complex mediates electron transfer from ubiquinol to cytochrome c. Contributes to the generation of a proton gradient across the mitochondrial membrane that is then used for ATP synthesis. In Petromyzon marinus (Sea lamprey), this protein is Cytochrome b (mt-cyb).